A 359-amino-acid chain; its full sequence is 3-dehydroquinate synthase (359 aa).

Residues 70 to 75, 104 to 108, 128 to 129, K141, and K150 each bind NAD(+); these read DAEGGK, GAATD, and TT. E183, H246, and H262 together coordinate Zn(2+).

This sequence belongs to the sugar phosphate cyclases superfamily. Dehydroquinate synthase family. It depends on Co(2+) as a cofactor. Zn(2+) serves as cofactor. Requires NAD(+) as cofactor.

The protein localises to the cytoplasm. It carries out the reaction 7-phospho-2-dehydro-3-deoxy-D-arabino-heptonate = 3-dehydroquinate + phosphate. It functions in the pathway metabolic intermediate biosynthesis; chorismate biosynthesis; chorismate from D-erythrose 4-phosphate and phosphoenolpyruvate: step 2/7. Functionally, catalyzes the conversion of 3-deoxy-D-arabino-heptulosonate 7-phosphate (DAHP) to dehydroquinate (DHQ). The polypeptide is 3-dehydroquinate synthase (Mycolicibacterium gilvum (strain PYR-GCK) (Mycobacterium gilvum (strain PYR-GCK))).